Here is a 189-residue protein sequence, read N- to C-terminus: Large ribosomal subunit protein uL6 (189 aa).

This sequence belongs to the universal ribosomal protein uL6 family. As to quaternary structure, part of the 50S ribosomal subunit.

This protein binds to the 23S rRNA, and is important in its secondary structure. It is located near the subunit interface in the base of the L7/L12 stalk, and near the tRNA binding site of the peptidyltransferase center. This Phocaeicola vulgatus (strain ATCC 8482 / DSM 1447 / JCM 5826 / CCUG 4940 / NBRC 14291 / NCTC 11154) (Bacteroides vulgatus) protein is Large ribosomal subunit protein uL6.